Consider the following 282-residue polypeptide: Bis(5'-nucleosyl)-tetraphosphatase, symmetrical (282 aa).

This sequence belongs to the Ap4A hydrolase family.

It catalyses the reaction P(1),P(4)-bis(5'-adenosyl) tetraphosphate + H2O = 2 ADP + 2 H(+). In terms of biological role, hydrolyzes diadenosine 5',5'''-P1,P4-tetraphosphate to yield ADP. In Klebsiella pneumoniae subsp. pneumoniae (strain ATCC 700721 / MGH 78578), this protein is Bis(5'-nucleosyl)-tetraphosphatase, symmetrical.